Reading from the N-terminus, the 368-residue chain is Agmatine deiminase (368 aa).

C357 (amidino-cysteine intermediate) is an active-site residue.

It belongs to the agmatine deiminase family. Homodimer.

It carries out the reaction agmatine + H2O = N-carbamoylputrescine + NH4(+). It functions in the pathway amine and polyamine biosynthesis; putrescine biosynthesis via agmatine pathway; N-carbamoylputrescine from agmatine: step 1/1. Its function is as follows. Mediates the hydrolysis of agmatine into N-carbamoylputrescine in the arginine decarboxylase (ADC) pathway of putrescine biosynthesis, a basic polyamine. The polypeptide is Agmatine deiminase (Pseudomonas aeruginosa (strain LESB58)).